Reading from the N-terminus, the 871-residue chain is MSAKGVSEKEHSPMMRQYLDVKDRYPDYLLLFRVGDFYETFFDDAREVAAALNIVLTRRSNEIPMAGFPHHASEGYIAKLVKKGYKVAVCDQVEDPAVAKGIVRREITDIITPGVTYSDSILDDRHNNYLCAIVFLRVGRQTVCGAAFIDVTTGEFRIAGLLPEDASVFLRSLHPAELLVSAADRERSETLRHALPAGTAFTVLDEWLFREEQAGEILARQFRTHSLKGFGIHDNPAGQVAAGVILHYLEETRQSSLQYITRITPLQSGDYMTLDLQTKRNLEIISSMQDGSINGSLLQVIDRTRNPMGARLLRQWLQRPLLRAADITMRLDAVDELKKMKPFRESVCCDLGQISDLERALARIATLRAIPREVRQLGSALAVIPLLKQSFQDTVSKRLCSIADALMPLPDLVAMIESAVDPEAGASMRDGGYIRKGYHQELDDLRQTASTAKERLLEIQQEERERTAIGSLKVQFNRVFGYYIEISKANRDKVPPYYEKKQTLVNAERFTIPALKEYEEKILNAEERSLVLEQQLFQALCCRIAGHAEVIQENAALIAEIDCLAAYAVCADEYGYCKPLIAEHTGLRILNGRHPVLERILPADEPYIANDALFDDRQKMLMITGPNMAGKSSYLRQTGLIVLLAQAGCFVPAEQAEIGVVDRIFTRVGASDNLASGESTFLVEMNEAADILNNATAKSLLLLDEIGRGTSTYDGLAIAWSMCEYIHRQIGARTLFATHYHELAELEGLLPGVVNYNASVLESGDRVIFLRKIVRGASDNSYGIEVARMSGMPSAVITRAKAILAGMEKRDIATPSSSGLSLQSMQISLFDEIDTRLRTAIEVIDIDRMTPLDALVELKKLQGLVRTGNII.

625 to 632 (GPNMAGKS) provides a ligand contact to ATP.

It belongs to the DNA mismatch repair MutS family.

This protein is involved in the repair of mismatches in DNA. It is possible that it carries out the mismatch recognition step. This protein has a weak ATPase activity. This is DNA mismatch repair protein MutS from Chlorobium limicola (strain DSM 245 / NBRC 103803 / 6330).